Reading from the N-terminus, the 517-residue chain is 2,4,6-trichlorophenol monooxygenase (517 aa).

The protein belongs to the FADH(2)-utilizing monooxygenase family. As to quaternary structure, homotetramer in solution.

The catalysed reaction is 2,4,6-trichlorophenol + FADH2 + O2 = 2-chloro-6-hydroxy-1,4-benzoquinone + FAD + 2 chloride + 3 H(+). It carries out the reaction 2,4,6-trichlorophenol + FADH2 + O2 = 2,6-dichlorobenzoquinone + FAD + chloride + H2O + H(+). It catalyses the reaction 2,6-dichlorobenzoquinone + H2O = 2-chloro-6-hydroxy-1,4-benzoquinone + chloride + 2 H(+). The protein operates within aromatic compound metabolism. It participates in xenobiotic degradation. Its function is as follows. Involved in the degradation of 2,4,6-trichlorophenol (2,4,6-TCP). Catalyzes the conversion of 2,4,6-TCP to 6-chlorohydroxyquinol (6-CHQ). The monooxygenase oxidizes 2,4,6-TCP to 2,6-dichloroquinone (2,6-DCBQ), which remains with the enzyme and is hydrolyzed to 2-chlorohydroxyquinone. 2-chlorohydroxyquinone is chemically reduced by ascorbate and NADH to 6-chlorohydroxyquinol (6-CHQ). This chain is 2,4,6-trichlorophenol monooxygenase, found in Cupriavidus pinatubonensis (strain JMP 134 / LMG 1197) (Cupriavidus necator (strain JMP 134)).